The primary structure comprises 214 residues: Nicotinamidase (214 aa).

The active-site Proton acceptor is the D18. D56, H58, H62, and H91 together coordinate a divalent metal cation. K116 is an active-site residue. The active-site Nucleophile is the C161.

It belongs to the isochorismatase family. It depends on a divalent metal cation as a cofactor.

The catalysed reaction is nicotinamide + H2O = nicotinate + NH4(+). It participates in cofactor biosynthesis; nicotinate biosynthesis; nicotinate from nicotinamide: step 1/1. In terms of biological role, catalyzes the deamidation of nicotinamide (NAM) into nicotinate (Na). Functions in the deamidating salvage pathway for production of NAD from nicotinamide. This Acinetobacter baylyi (strain ATCC 33305 / BD413 / ADP1) protein is Nicotinamidase.